A 211-amino-acid polypeptide reads, in one-letter code: MSLSDIQQAILSLITNHINADGVSPSQTEIARAFGFKGVRAVQHHLDVLEQQGMIRRVPGQARGIRLKHLTQVDEAALALQSEDVLRLPVLGRVAAGQPIGADIGEDRVVLLDRVFFSPAPDYLLRVQGDSMRDEGIFDGDLIGVHRTHDAHSGQIVVARIDDEITVKLLKISKDRIRLLPRNPDFAPIEVRSDQDFAIEGLYCGLLRPNR.

Positions 27-47 form a DNA-binding region, H-T-H motif; it reads QTEIARAFGFKGVRAVQHHLD. Catalysis depends on for autocatalytic cleavage activity residues Ser-131 and Lys-168.

It belongs to the peptidase S24 family. In terms of assembly, homodimer.

It carries out the reaction Hydrolysis of Ala-|-Gly bond in repressor LexA.. Its function is as follows. Represses a number of genes involved in the response to DNA damage (SOS response), including recA and lexA. In the presence of single-stranded DNA, RecA interacts with LexA causing an autocatalytic cleavage which disrupts the DNA-binding part of LexA, leading to derepression of the SOS regulon and eventually DNA repair. This chain is LexA repressor, found in Xylella fastidiosa (strain M12).